A 100-amino-acid chain; its full sequence is Defensin-6 (100 aa).

The N-terminal stretch at 1–19 is a signal peptide; it reads MRTLTILTAVLLVALQAKA. A propeptide spanning residues 20-68 is cleaved from the precursor; the sequence is EPLQAEDEPLQAKAYEADAQEQRGANDQDFAVSFAEDASSSLRALGSTR. Cystine bridges form between Cys72–Cys99, Cys74–Cys88, and Cys78–Cys98.

This sequence belongs to the alpha-defensin family. Homodimer. Self-assembles into higher-order oligomers termed nanonets, fibril-like structures that entrap microbes. Self-assembly into nanonets seems to protect against proteolytic digestion in duodenal fluid. Interacts with Y.enterocolitica invasin and S.typhimurium fliC/flagellim; the interaction creates an anchoring site for progressive DEFA6 self-assembly into nanonets. In terms of processing, proteolytically cleaved by trypsin at Arg-68; the propeptide is stored in the tissue of the small intestine and the mature peptide is found in the luminal fluid; cleavage may occur during or after release into the lumen. The N-terminal propeptide region suppresses self-assembly and renders DEFA6 propeptide unable to agglutinate bacteria and protect human epithelial cells from bacterial invasion. Under reducing conditions, naturally present in the gut owing to the low redox potential or enzymatically generated by the thioredoxin system, the disulfide bridges are opened leading to a conformational change of DEF6, thereby changing its antimicrobial spectrum. The reduced form exhibits inhibitory activity against anaerobic bacteria, in contrast to the minimal antimicrobial activity of the disulfide-linked oxidized form. The formation of higher-order nanonets and bacterial entrapment is independent of the redox state.

It localises to the secreted. The protein resides in the cytoplasmic vesicle. The protein localises to the secretory vesicle. In terms of biological role, host-defense peptide that contributes to intestinal innate immunity and mediates homeostasis at mucosal surfaces by forming higher-order oligomers that capture bacteria and prevent microbial invasion of the epithelium. After binding to bacterial surface proteins, undergoes ordered self-assembly to form fibril-like nanonets that surround and entangle bacteria and thereby prevent bacterial invasion across the epithelial barrier. Entangles and agglutinates Gram-negative bacteria, such as E.coli, S.typhimurium and Y.enterocolitica, and Gram-positive bacteria such as L.monocytogenes, thereby protecting the intestine against invasion by enteric bacterial pathogens. Blocks adhesion of C.albicans to intestinal epithelial cells and thereby suppresses fungal invasion of epithelial cells and biofilm formation. Under reducing conditions and in an acidic environment similar to the intestinal milieu, exhibits inhibitory activity against anaerobic bacteria such as B.adolescentis, L.acidophilus, and B.breve, as well as B.longum and S.thermophilus, possibly by leading to alterations in bacterial cell envelope structures. The disulfide-linked oxidized form exhibits negligible antimicrobial activity against Gram-negative and Gram-positive bacteria, as compared to the enteric defensin DEFA5. This is Defensin-6 (DEFA6) from Pan troglodytes (Chimpanzee).